Reading from the N-terminus, the 180-residue chain is MTKKFLNIHLTIAKFGAAHGILGWIRVFSYTEKKENIFDYVPWFIKKEQKIIKILPKYWKILKKTFLVKINDVNNRSMAQKLTNYDILINQKTLPKLNNNEYYWKDIVDCTVFDTNFIKLGRVSELIRTPSNDILVVKASNIKNISQNDMLIPFLHPQIISEVNINNKKIVIKNWKQTFE.

Residues 99-179 enclose the PRC barrel domain; sequence NNEYYWKDIV…IVIKNWKQTF (81 aa).

The protein belongs to the RimM family. As to quaternary structure, binds ribosomal protein uS19.

The protein resides in the cytoplasm. Its function is as follows. An accessory protein needed during the final step in the assembly of 30S ribosomal subunit, possibly for assembly of the head region. Essential for efficient processing of 16S rRNA. May be needed both before and after RbfA during the maturation of 16S rRNA. It has affinity for free ribosomal 30S subunits but not for 70S ribosomes. The protein is Ribosome maturation factor RimM of Buchnera aphidicola subsp. Baizongia pistaciae (strain Bp).